Consider the following 417-residue polypeptide: NADH-quinone oxidoreductase subunit D (417 aa).

It belongs to the complex I 49 kDa subunit family. As to quaternary structure, NDH-1 is composed of 14 different subunits. Subunits NuoB, C, D, E, F, and G constitute the peripheral sector of the complex.

It localises to the cell inner membrane. The enzyme catalyses a quinone + NADH + 5 H(+)(in) = a quinol + NAD(+) + 4 H(+)(out). Its function is as follows. NDH-1 shuttles electrons from NADH, via FMN and iron-sulfur (Fe-S) centers, to quinones in the respiratory chain. The immediate electron acceptor for the enzyme in this species is believed to be ubiquinone. Couples the redox reaction to proton translocation (for every two electrons transferred, four hydrogen ions are translocated across the cytoplasmic membrane), and thus conserves the redox energy in a proton gradient. This is NADH-quinone oxidoreductase subunit D from Burkholderia orbicola (strain MC0-3).